The sequence spans 760 residues: Catecholate siderophore receptor Fiu (760 aa).

The signal sequence occupies residues 1-31 (MENNRNFPARQFHSLTFFAGLCIGITPVAQA). The TBDR plug domain maps to 67–175 (PVADTTRTMT…PTGSINMISK (109 aa)). Positions 180 to 760 (DSGIDASASI…TFLLTANMHF (581 aa)) constitute a TBDR beta-barrel domain. The TonB C-terminal box motif lies at 743–760 (RYHPGEPRTFLLTANMHF).

Belongs to the TonB-dependent receptor family.

It is found in the cell outer membrane. In terms of biological role, involved in the active transport across the outer membrane of iron complexed with catecholate siderophores such as dihydroxybenzoylserine and dihydroxybenzoate. It derives its energy for transport by interacting with the trans-periplasmic membrane protein TonB. Can also transport catechol-substituted cephalosporins. Receptor for microcins M, H47 and E492. In Escherichia coli O6:H1 (strain CFT073 / ATCC 700928 / UPEC), this protein is Catecholate siderophore receptor Fiu (fiu).